An 84-amino-acid chain; its full sequence is Exodeoxyribonuclease 7 small subunit (84 aa).

Belongs to the XseB family. In terms of assembly, heterooligomer composed of large and small subunits.

The protein resides in the cytoplasm. It catalyses the reaction Exonucleolytic cleavage in either 5'- to 3'- or 3'- to 5'-direction to yield nucleoside 5'-phosphates.. Its function is as follows. Bidirectionally degrades single-stranded DNA into large acid-insoluble oligonucleotides, which are then degraded further into small acid-soluble oligonucleotides. This chain is Exodeoxyribonuclease 7 small subunit, found in Azoarcus sp. (strain BH72).